Here is a 5148-residue protein sequence, read N- to C-terminus: E3 ubiquitin-protein ligase RNF213 (5148 aa).

Over residues 38–48 (DNTLVVSSTPE) the composition is skewed to polar residues. The interval 38 to 341 (DNTLVVSSTP…QAAAPEPTSA (304 aa)) is disordered. The segment covering 69 to 78 (PGKELEKPEE) has biased composition (basic and acidic residues). Over residues 101–113 (GTISSSEAPSSGL) the composition is skewed to polar residues. Residues 130–146 (PQNQAQQGGAASQPGHP) are compositionally biased toward low complexity. Position 196 is a phosphoserine (Ser196). 3 stretches are compositionally biased toward basic and acidic residues: residues 233 to 245 (SKGETSGQEKKVP), 257 to 267 (AGKETGEDVRK), and 279 to 289 (KHGDQEAELKG). Positions 319–335 (AAAVKTQQAAAPQQAAA) are enriched in low complexity. Lys1128 participates in a covalent cross-link: Glycyl lysine isopeptide (Lys-Gly) (interchain with G-Cter in SUMO2). Residues 1957–1962 (GVGKSL), Glu2060, Ala2114, Asp2116, and Arg2177 each bind ATP. Ser2234 carries the post-translational modification Phosphoserine. Residues Lys2460 and Ser2535 each coordinate ATP. Positions 3435–3465 (EEMEIETSQSKELAEEQMEVEDSEEMKKASD) form a coiled coil. Residues Cys3947, Cys3950, Cys3962, His3964, Cys3967, Cys3970, Cys3982, Cys3985, Cys4451, and His4455 each contribute to the Zn(2+) site. The segment at 3947–3986 (CFICHGDAQDPVCLPCDHVYCLRCIQTWLIPGQMMCPYCL) adopts an RING-type zinc-finger fold. The RZ-type zinc-finger motif lies at 4429-4501 (MPEDLLVHAR…IRNNEDRTQT (73 aa)). The active-site Nucleophile; for E3 ubiquitin-lipopolysaccharide ligase activity is the Cys4462. The Zn(2+) site is built by Cys4471 and Cys4474.

Belongs to the AAA ATPase family. In terms of assembly, monomer. Interacts with UBE2L3/UBCH7; UBE2L3/UBCH7 is the most efficient ubiquitin-conjugating enzyme E2 for the ubiquitin ligase activity. Interacts with UBE2N/UBC13; promoting 'Lys-63'-linked ubiquitination of target proteins.

The protein localises to the cytoplasm. Its subcellular location is the cytosol. The protein resides in the lipid droplet. It carries out the reaction S-ubiquitinyl-[E2 ubiquitin-conjugating enzyme]-L-cysteine + [acceptor protein]-L-lysine = [E2 ubiquitin-conjugating enzyme]-L-cysteine + N(6)-ubiquitinyl-[acceptor protein]-L-lysine.. The enzyme catalyses ATP + H2O = ADP + phosphate + H(+). It functions in the pathway protein modification; protein ubiquitination. In terms of biological role, atypical E3 ubiquitin ligase that can catalyze ubiquitination of both proteins and lipids, and which is involved in various processes, such as lipid metabolism, angiogenesis and cell-autonomous immunity. Acts as a key immune sensor by catalyzing ubiquitination of the lipid A moiety of bacterial lipopolysaccharide (LPS) via its RZ-type zinc-finger: restricts the proliferation of cytosolic bacteria, such as Salmonella, by generating the bacterial ubiquitin coat through the ubiquitination of LPS. Also acts indirectly by mediating the recruitment of the LUBAC complex, which conjugates linear polyubiquitin chains. Ubiquitination of LPS triggers cell-autonomous immunity, such as antibacterial autophagy, leading to degradation of the microbial invader. Involved in lipid metabolism by regulating fat storage and lipid droplet formation; act by inhibiting the lipolytic process. Also regulates lipotoxicity by inhibiting desaturation of fatty acids. Also acts as an E3 ubiquitin-protein ligase via its RING-type zinc finger: mediates 'Lys-63'-linked ubiquitination of target proteins. Involved in the non-canonical Wnt signaling pathway in vascular development: acts by mediating ubiquitination and degradation of FLNA and NFATC2 downstream of RSPO3, leading to inhibit the non-canonical Wnt signaling pathway and promoting vessel regression. Also has ATPase activity; ATPase activity is required for ubiquitination of LPS. The chain is E3 ubiquitin-protein ligase RNF213 from Mus musculus (Mouse).